A 194-amino-acid chain; its full sequence is Molybdenum cofactor guanylyltransferase (194 aa).

Residues 12-14 (LAG), K25, N53, D71, and D101 each bind GTP. Residue D101 coordinates Mg(2+).

It belongs to the MobA family. Monomer. It depends on Mg(2+) as a cofactor.

It localises to the cytoplasm. It carries out the reaction Mo-molybdopterin + GTP + H(+) = Mo-molybdopterin guanine dinucleotide + diphosphate. In terms of biological role, transfers a GMP moiety from GTP to Mo-molybdopterin (Mo-MPT) cofactor (Moco or molybdenum cofactor) to form Mo-molybdopterin guanine dinucleotide (Mo-MGD) cofactor. The chain is Molybdenum cofactor guanylyltransferase from Escherichia coli O6:H1 (strain CFT073 / ATCC 700928 / UPEC).